The chain runs to 213 residues: Adenylate kinase (213 aa).

10 to 15 (GAGKGT) is a binding site for ATP. Residues 30-59 (STGDMLRAALKEGTPLGLEAKKYMDQGALV) form an NMP region. AMP-binding positions include Thr31, Arg36, 57 to 59 (ALV), 85 to 88 (GFPR), and Gln92. The interval 126 to 163 (GRRTCRSCGAGFHVMFDPPKTDGKCDKCGGELYQRDDD) is LID. Position 127 (Arg127) interacts with ATP. Zn(2+)-binding residues include Cys130, Cys133, Cys150, and Cys153. Positions 160 and 171 each coordinate AMP. Gly199 serves as a coordination point for ATP.

Belongs to the adenylate kinase family. In terms of assembly, monomer.

The protein localises to the cytoplasm. It carries out the reaction AMP + ATP = 2 ADP. Its pathway is purine metabolism; AMP biosynthesis via salvage pathway; AMP from ADP: step 1/1. In terms of biological role, catalyzes the reversible transfer of the terminal phosphate group between ATP and AMP. Plays an important role in cellular energy homeostasis and in adenine nucleotide metabolism. This is Adenylate kinase from Syntrophobacter fumaroxidans (strain DSM 10017 / MPOB).